Here is a 908-residue protein sequence, read N- to C-terminus: PTS system glucose-specific EIICBA component (908 aa).

Positions 1 to 264 constitute a PTS EIIC type-1; first part domain; sequence MQISLVKIRN…YAPLWYTSAG (264 aa). The next 5 membrane-spanning stretches (helical) occupy residues 31 to 51, 71 to 91, 100 to 120, 155 to 175, and 189 to 209; these read LMIP…GDAI, GGNV…AITF, FSAF…IIPV, VFGG…FYAI, and FVPI…LMVW. The tract at residues 265–450 is unknown; it reads GSLQEIANQQ…VSQFTVAVPS (186 aa). The region spanning 451-602 is the PTS EIIC type-1; second part domain; sequence LNPAQYSQGK…FNLATPGRGG (152 aa). 5 helical membrane-spanning segments follow: residues 459–479, 487–507, 509–529, 536–556, and 571–591; these read GKFP…ILAA, ASSI…TEPF, FTFL…LAAV, LLSA…ILYG, and VPII…FLTI. The region spanning 631-713 is the PTS EIIB type-1 domain; it reads QIEAGMLLRA…QDIIQGKVNW (83 aa). Cys-653 (phosphocysteine intermediate; for EIIB activity) is an active-site residue. The PTS EIIA type-1 domain occupies 762–875; sequence DDTFKNRLVG…DPITPFIVMQ (114 aa). The active-site Tele-phosphohistidine intermediate; for EIIA activity is His-815.

The protein localises to the cell membrane. It catalyses the reaction N(pros)-phospho-L-histidyl-[protein] + D-glucose(out) = D-glucose 6-phosphate(in) + L-histidyl-[protein]. Functionally, the phosphoenolpyruvate-dependent sugar phosphotransferase system (sugar PTS), a major carbohydrate active transport system, catalyzes the phosphorylation of incoming sugar substrates concomitantly with their translocation across the cell membrane. This system is involved in glucose transport. The sequence is that of PTS system glucose-specific EIICBA component (ptsG) from Mycoplasma genitalium (strain ATCC 33530 / DSM 19775 / NCTC 10195 / G37) (Mycoplasmoides genitalium).